The chain runs to 159 residues: Protransforming growth factor alpha (159 aa).

An N-terminal signal peptide occupies residues 1–23; that stretch reads MVPAAGQLALLALGILVAVCQAL. A propeptide spans 24–38 (removed in mature form); it reads ENSTSPLSDSPVAAA. Residues 24–97 lie on the Extracellular side of the membrane; the sequence is ENSTSPLSDS…AVVAASQKKQ (74 aa). The N-linked (GlcNAc...) asparagine glycan is linked to Asn25. The 41-residue stretch at 42-82 folds into the EGF-like domain; the sequence is HFNKCPDSHTQYCFHGTCRFLVQEEKPACVCHSGYVGVRCE. Intrachain disulfides connect Cys46–Cys59, Cys54–Cys70, and Cys72–Cys81. A propeptide spans 89–159 (removed in mature form); sequence VVAASQKKQA…TACCHSETVV (71 aa). The helical transmembrane segment at 98 to 123 threads the bilayer; it reads AITALVVVSIVALAVLIITCVLIHCC. The Cytoplasmic portion of the chain corresponds to 124–159; that stretch reads QVRKHCEWCRALVCRHEKPSALLKGRTACCHSETVV. Residues Cys152 and Cys153 are each lipidated (S-palmitoyl cysteine).

Interacts with the PDZ domains of MAGI3, SDCBP and SNTA1. The interaction with SDCBP, is required for the targeting to the cell surface. In the endoplasmic reticulum, in its immature form (i.e. with a prosegment and lacking full N-glycosylation), interacts with CNIH. In the Golgi apparatus, may form a complex with CNIH and GORASP2. Interacts (via cytoplasmic C-terminal domain) with NKD2.

The protein localises to the secreted. The protein resides in the extracellular space. It is found in the cell membrane. In terms of biological role, TGF alpha is a mitogenic polypeptide that is able to bind to the EGF receptor/EGFR and to act synergistically with TGF beta to promote anchorage-independent cell proliferation in soft agar. This Rattus norvegicus (Rat) protein is Protransforming growth factor alpha (Tgfa).